The primary structure comprises 113 residues: uncharacterized protein (113 aa).

The first 38 residues, M1–A38, serve as a signal peptide directing secretion.

This is an uncharacterized protein from Haemophilus influenzae (strain ATCC 51907 / DSM 11121 / KW20 / Rd).